The sequence spans 205 residues: Isochorismatase domain-containing protein 2 (205 aa).

Phosphoserine occurs at positions 7 and 202.

This sequence belongs to the isochorismatase family. As to quaternary structure, interacts with CDKN2A.

The protein resides in the cytoplasm. Its subcellular location is the nucleus. The protein is Isochorismatase domain-containing protein 2 (ISOC2) of Pongo abelii (Sumatran orangutan).